The sequence spans 176 residues: Urease accessory protein UreE (176 aa).

Positions 134 to 176 (EAGAYGSGGHHHHGESSQGHAHGPLAPIPVHQKIHRPSDIPSR) are disordered.

The protein belongs to the UreE family.

The protein localises to the cytoplasm. Functionally, involved in urease metallocenter assembly. Binds nickel. Probably functions as a nickel donor during metallocenter assembly. This chain is Urease accessory protein UreE, found in Nitrosospira multiformis (strain ATCC 25196 / NCIMB 11849 / C 71).